Here is a 452-residue protein sequence, read N- to C-terminus: Bifunctional protein GlmU (452 aa).

The pyrophosphorylase stretch occupies residues 1–224 (MNIVILAAGM…VWETHGVNSK (224 aa)). Residues 6-9 (LAAG), K20, Q71, 76-77 (GT), 98-100 (YGD), G135, E149, N164, and N222 each bind UDP-N-acetyl-alpha-D-glucosamine. D100 contributes to the Mg(2+) binding site. A Mg(2+)-binding site is contributed by N222. Residues 225 to 245 (VQLAELERVHQNNIARALLEH) form a linker region. The tract at residues 246–452 (GVTLADPARI…GWQRPVKIKK (207 aa)) is N-acetyltransferase. Positions 328 and 346 each coordinate UDP-N-acetyl-alpha-D-glucosamine. The Proton acceptor role is filled by H358. 2 residues coordinate UDP-N-acetyl-alpha-D-glucosamine: Y361 and N372. Residues A375, 381 to 382 (NY), S400, A418, and R435 each bind acetyl-CoA.

The protein in the N-terminal section; belongs to the N-acetylglucosamine-1-phosphate uridyltransferase family. This sequence in the C-terminal section; belongs to the transferase hexapeptide repeat family. As to quaternary structure, homotrimer. Mg(2+) serves as cofactor.

Its subcellular location is the cytoplasm. The enzyme catalyses alpha-D-glucosamine 1-phosphate + acetyl-CoA = N-acetyl-alpha-D-glucosamine 1-phosphate + CoA + H(+). It carries out the reaction N-acetyl-alpha-D-glucosamine 1-phosphate + UTP + H(+) = UDP-N-acetyl-alpha-D-glucosamine + diphosphate. It participates in nucleotide-sugar biosynthesis; UDP-N-acetyl-alpha-D-glucosamine biosynthesis; N-acetyl-alpha-D-glucosamine 1-phosphate from alpha-D-glucosamine 6-phosphate (route II): step 2/2. It functions in the pathway nucleotide-sugar biosynthesis; UDP-N-acetyl-alpha-D-glucosamine biosynthesis; UDP-N-acetyl-alpha-D-glucosamine from N-acetyl-alpha-D-glucosamine 1-phosphate: step 1/1. The protein operates within bacterial outer membrane biogenesis; LPS lipid A biosynthesis. Its function is as follows. Catalyzes the last two sequential reactions in the de novo biosynthetic pathway for UDP-N-acetylglucosamine (UDP-GlcNAc). The C-terminal domain catalyzes the transfer of acetyl group from acetyl coenzyme A to glucosamine-1-phosphate (GlcN-1-P) to produce N-acetylglucosamine-1-phosphate (GlcNAc-1-P), which is converted into UDP-GlcNAc by the transfer of uridine 5-monophosphate (from uridine 5-triphosphate), a reaction catalyzed by the N-terminal domain. The sequence is that of Bifunctional protein GlmU from Herminiimonas arsenicoxydans.